The following is a 425-amino-acid chain: Serine--tRNA ligase (425 aa).

230–232 provides a ligand contact to L-serine; it reads TAE. ATP is bound at residue 261-263; it reads RSE. Glu-284 contacts L-serine. Position 348-351 (348-351) interacts with ATP; that stretch reads EISS. An L-serine-binding site is contributed by Ser-384.

The protein belongs to the class-II aminoacyl-tRNA synthetase family. Type-1 seryl-tRNA synthetase subfamily. Homodimer. The tRNA molecule binds across the dimer.

The protein localises to the cytoplasm. The enzyme catalyses tRNA(Ser) + L-serine + ATP = L-seryl-tRNA(Ser) + AMP + diphosphate + H(+). It carries out the reaction tRNA(Sec) + L-serine + ATP = L-seryl-tRNA(Sec) + AMP + diphosphate + H(+). It participates in aminoacyl-tRNA biosynthesis; selenocysteinyl-tRNA(Sec) biosynthesis; L-seryl-tRNA(Sec) from L-serine and tRNA(Sec): step 1/1. Catalyzes the attachment of serine to tRNA(Ser). Is also able to aminoacylate tRNA(Sec) with serine, to form the misacylated tRNA L-seryl-tRNA(Sec), which will be further converted into selenocysteinyl-tRNA(Sec). This chain is Serine--tRNA ligase, found in Streptococcus gordonii (strain Challis / ATCC 35105 / BCRC 15272 / CH1 / DL1 / V288).